A 179-amino-acid chain; its full sequence is Large ribosomal subunit protein uL5 (179 aa).

Belongs to the universal ribosomal protein uL5 family. In terms of assembly, part of the 50S ribosomal subunit; part of the 5S rRNA/L5/L18/L25 subcomplex. Contacts the 5S rRNA and the P site tRNA. Forms a bridge to the 30S subunit in the 70S ribosome.

Its function is as follows. This is one of the proteins that bind and probably mediate the attachment of the 5S RNA into the large ribosomal subunit, where it forms part of the central protuberance. In the 70S ribosome it contacts protein S13 of the 30S subunit (bridge B1b), connecting the 2 subunits; this bridge is implicated in subunit movement. Contacts the P site tRNA; the 5S rRNA and some of its associated proteins might help stabilize positioning of ribosome-bound tRNAs. The sequence is that of Large ribosomal subunit protein uL5 from Yersinia pestis.